A 455-amino-acid chain; its full sequence is Probable galactarate/D-glucarate transporter GudP (455 aa).

The next 12 helical transmembrane spans lie at 19–39, 59–79, 87–107, 108–128, 153–173, 177–197, 253–273, 289–309, 320–340, 348–368, 386–406, and 414–434; these read WFIV…RATL, YVFS…GWLL, IIAL…AIGF, FSAG…GLSE, AFFN…MGWL, FGWH…AVIW, IGVY…LTWF, GFVA…GGIV, LTFA…SMIV, WLVV…ALGW, LFNT…GYIV, and GALV…LLLV.

It belongs to the major facilitator superfamily. Phthalate permease family.

It localises to the cell membrane. It catalyses the reaction galactarate(in) + H(+)(in) = galactarate(out) + H(+)(out). The catalysed reaction is D-glucarate(in) + H(+)(in) = D-glucarate(out) + H(+)(out). Probably involved in the uptake of galactarate and/or D-glucarate. The protein is Probable galactarate/D-glucarate transporter GudP of Bacillus subtilis (strain 168).